The chain runs to 37 residues: Large ribosomal subunit protein bL36 (37 aa).

Belongs to the bacterial ribosomal protein bL36 family.

The polypeptide is Large ribosomal subunit protein bL36 (Metamycoplasma arthritidis (strain 158L3-1) (Mycoplasma arthritidis)).